Here is a 119-residue protein sequence, read N- to C-terminus: Large ribosomal subunit protein bL20 (119 aa).

It belongs to the bacterial ribosomal protein bL20 family.

Functionally, binds directly to 23S ribosomal RNA and is necessary for the in vitro assembly process of the 50S ribosomal subunit. It is not involved in the protein synthesizing functions of that subunit. This chain is Large ribosomal subunit protein bL20, found in Dehalococcoides mccartyi (strain ATCC BAA-2100 / JCM 16839 / KCTC 5957 / BAV1).